The sequence spans 654 residues: Acetyl-coenzyme A synthetase (654 aa).

CoA-binding positions include 193-196 (RRGK) and threonine 313. ATP is bound by residues 389 to 391 (GEP), 413 to 418 (DTWWQT), aspartate 506, and arginine 521. Serine 529 is a CoA binding site. An ATP-binding site is contributed by arginine 532. Histidine 545 and valine 548 together coordinate Mg(2+). Lysine 619 carries the N6-acetyllysine modification.

Belongs to the ATP-dependent AMP-binding enzyme family. It depends on Mg(2+) as a cofactor. Acetylated. Deacetylation by the SIR2-homolog deacetylase activates the enzyme.

The catalysed reaction is acetate + ATP + CoA = acetyl-CoA + AMP + diphosphate. Functionally, catalyzes the conversion of acetate into acetyl-CoA (AcCoA), an essential intermediate at the junction of anabolic and catabolic pathways. AcsA undergoes a two-step reaction. In the first half reaction, AcsA combines acetate with ATP to form acetyl-adenylate (AcAMP) intermediate. In the second half reaction, it can then transfer the acetyl group from AcAMP to the sulfhydryl group of CoA, forming the product AcCoA. The protein is Acetyl-coenzyme A synthetase of Wolinella succinogenes (strain ATCC 29543 / DSM 1740 / CCUG 13145 / JCM 31913 / LMG 7466 / NCTC 11488 / FDC 602W) (Vibrio succinogenes).